The sequence spans 142 residues: Hemoglobin subunit alpha (142 aa).

In terms of domain architecture, Globin spans 2 to 142; the sequence is KLSAEDKHNV…VGHVLTSKYR (141 aa). An O2-binding site is contributed by H59. Heme b is bound at residue H88.

This sequence belongs to the globin family. As to quaternary structure, heterotetramer of two alpha chains and two beta chains. As to expression, red blood cells.

Involved in oxygen transport from the lung to the various peripheral tissues. In Taricha granulosa (Roughskin newt), this protein is Hemoglobin subunit alpha (HBA).